Consider the following 373-residue polypeptide: Dual-specificity RNA methyltransferase RlmN (373 aa).

Catalysis depends on E94, which acts as the Proton acceptor. A Radical SAM core domain is found at E100–D339. C107 and C344 form a disulfide bridge. [4Fe-4S] cluster contacts are provided by C114, C118, and C121. Residues G168 to E169, S200, S222 to H224, and N301 contribute to the S-adenosyl-L-methionine site. Residue C344 is the S-methylcysteine intermediate of the active site.

This sequence belongs to the radical SAM superfamily. RlmN family. It depends on [4Fe-4S] cluster as a cofactor.

The protein localises to the cytoplasm. It carries out the reaction adenosine(2503) in 23S rRNA + 2 reduced [2Fe-2S]-[ferredoxin] + 2 S-adenosyl-L-methionine = 2-methyladenosine(2503) in 23S rRNA + 5'-deoxyadenosine + L-methionine + 2 oxidized [2Fe-2S]-[ferredoxin] + S-adenosyl-L-homocysteine. The enzyme catalyses adenosine(37) in tRNA + 2 reduced [2Fe-2S]-[ferredoxin] + 2 S-adenosyl-L-methionine = 2-methyladenosine(37) in tRNA + 5'-deoxyadenosine + L-methionine + 2 oxidized [2Fe-2S]-[ferredoxin] + S-adenosyl-L-homocysteine. Functionally, specifically methylates position 2 of adenine 2503 in 23S rRNA and position 2 of adenine 37 in tRNAs. m2A2503 modification seems to play a crucial role in the proofreading step occurring at the peptidyl transferase center and thus would serve to optimize ribosomal fidelity. The polypeptide is Dual-specificity RNA methyltransferase RlmN (Tolumonas auensis (strain DSM 9187 / NBRC 110442 / TA 4)).